Here is a 158-residue protein sequence, read N- to C-terminus: Ribosomal RNA large subunit methyltransferase H (158 aa).

Residues Leu-74, Gly-105, and 124–129 (LGPLTL) each bind S-adenosyl-L-methionine.

It belongs to the RNA methyltransferase RlmH family. As to quaternary structure, homodimer.

The protein resides in the cytoplasm. It catalyses the reaction pseudouridine(1915) in 23S rRNA + S-adenosyl-L-methionine = N(3)-methylpseudouridine(1915) in 23S rRNA + S-adenosyl-L-homocysteine + H(+). In terms of biological role, specifically methylates the pseudouridine at position 1915 (m3Psi1915) in 23S rRNA. This Xylella fastidiosa (strain Temecula1 / ATCC 700964) protein is Ribosomal RNA large subunit methyltransferase H.